The following is a 130-amino-acid chain: Large ribosomal subunit protein bL17 (130 aa).

Belongs to the bacterial ribosomal protein bL17 family. In terms of assembly, part of the 50S ribosomal subunit. Contacts protein L32.

The protein is Large ribosomal subunit protein bL17 of Buchnera aphidicola subsp. Acyrthosiphon pisum (strain APS) (Acyrthosiphon pisum symbiotic bacterium).